The sequence spans 346 residues: Propane 2-monooxygenase, reductase component (346 aa).

The 90-residue stretch at 5 to 94 (HKISFEPVDI…DCEIELLNFD (90 aa)) folds into the 2Fe-2S ferredoxin-type domain. [2Fe-2S] cluster is bound by residues cysteine 39, cysteine 44, cysteine 46, and cysteine 78. Positions 104–205 (IQDVTTKVAA…NGPYGSCTLR (102 aa)) constitute an FAD-binding FR-type domain.

Belongs to the bacterial ring-hydroxylating dioxygenase ferredoxin reductase family. As to quaternary structure, the propane 2-monooxygenase multicomponent enzyme system is composed of an electron transfer component and a monooxygenase component interacting with the effector protein PrmD. The electron transfer component is composed of a reductase (PrmB), and the monooxygenase component is formed by a large subunit (PrmA) and a small subunit (PrmC). Requires FAD as cofactor. It depends on [2Fe-2S] cluster as a cofactor.

Functionally, reductase component of the propane 2-monooxygenase multicomponent enzyme system which is involved in the degradation of propane via the O2-dependent hydroxylation of propane. Reductase catalyzes the transfer of electrons from NADH or NADPH to monooxygenase. The sequence is that of Propane 2-monooxygenase, reductase component from Gordonia sp. (strain TY-5).